Reading from the N-terminus, the 823-residue chain is Protein Jade-3 (823 aa).

The disordered stretch occupies residues 1 to 32; that stretch reads MKRHRPVSSSDSSDESPSTSFTSGSMYRIKSK. Low complexity predominate over residues 8-25; that stretch reads SSSDSSDESPSTSFTSGS. Lysine 30 and lysine 32 each carry N6-acetyllysine. Serine 85 carries the phosphoserine modification. Residues 200-250 form a PHD-type 1 zinc finger; the sequence is DVICDVCRSPDSEEGNDMVFCDKCNVCVHQACYGILKVPEGSWLCRSCVLG. A C2HC pre-PHD-type zinc finger spans residues 252-286; it reads YPQCVLCPKKGGALKTTKTGTKWAHVSCALWIPEV. The segment at 310-366 adopts a PHD-type 2 zinc-finger fold; the sequence is LVCNLCKLKTGACIQCSIKSCITAFHVTCAFEHGLEMKTILDEGDEVKFKSYCLKHS. Disordered stretches follow at residues 372–395 and 542–576; these read LGEA…KTSL and KLKM…VHSI. Over residues 561–575 the composition is skewed to low complexity; that stretch reads DQQPHSPDSSSSVHS. Serine 566 bears the Phosphoserine mark. Lysine 601 is modified (N6-acetyllysine). Serine 608 is modified (phosphoserine). Positions 609-630 are disordered; sequence LSHSRSEAKESSPAWRTPSSEC. Residue lysine 638 is modified to N6-acetyllysine. Composition is skewed to polar residues over residues 650 to 664 and 673 to 684; these read SSIG…SKFA and WSGNVTQKDSSS. Positions 650-684 are disordered; it reads SSIGNGKSQPNSKFAKSNGLEGSWSGNVTQKDSSS. Lysine 735 bears the N6-acetyllysine mark. Residues 758–823 are disordered; it reads RAPYQENDGY…HPLSHSSMQR (66 aa). A phosphoserine mark is found at serine 774, serine 776, and serine 780. Residues 781–809 show a composition bias toward basic and acidic residues; that stretch reads DGNKEKVRVRKDSSDRENPPHDSRRDCHG.

Belongs to the JADE family. Component of the HBO1 complex composed at least of ING4 or ING5, KAT7/HBO1, MEAF6, and one of JADE1, JADE2 and JADE3. In terms of tissue distribution, ubiquitously expressed, with highest levels in placenta and uterus.

In terms of biological role, scaffold subunit of some HBO1 complexes, which have a histone H4 acetyltransferase activity. This is Protein Jade-3 (JADE3) from Homo sapiens (Human).